The primary structure comprises 426 residues: Serine--tRNA ligase (426 aa).

An L-serine-binding site is contributed by 233–235 (TSE). Residue 264-266 (RAE) participates in ATP binding. Glu-287 serves as a coordination point for L-serine. Residue 351-354 (EISS) coordinates ATP. Ser-387 is an L-serine binding site.

Belongs to the class-II aminoacyl-tRNA synthetase family. Type-1 seryl-tRNA synthetase subfamily. Homodimer. The tRNA molecule binds across the dimer.

It is found in the cytoplasm. It catalyses the reaction tRNA(Ser) + L-serine + ATP = L-seryl-tRNA(Ser) + AMP + diphosphate + H(+). The enzyme catalyses tRNA(Sec) + L-serine + ATP = L-seryl-tRNA(Sec) + AMP + diphosphate + H(+). It participates in aminoacyl-tRNA biosynthesis; selenocysteinyl-tRNA(Sec) biosynthesis; L-seryl-tRNA(Sec) from L-serine and tRNA(Sec): step 1/1. In terms of biological role, catalyzes the attachment of serine to tRNA(Ser). Is also able to aminoacylate tRNA(Sec) with serine, to form the misacylated tRNA L-seryl-tRNA(Sec), which will be further converted into selenocysteinyl-tRNA(Sec). This Stenotrophomonas maltophilia (strain R551-3) protein is Serine--tRNA ligase.